A 373-amino-acid chain; its full sequence is Alanine racemase (373 aa).

Catalysis depends on K35, which acts as the Proton acceptor; specific for D-alanine. K35 bears the N6-(pyridoxal phosphate)lysine mark. R130 contributes to the substrate binding site. The active-site Proton acceptor; specific for L-alanine is Y253. Position 305 (M305) interacts with substrate.

This sequence belongs to the alanine racemase family. Pyridoxal 5'-phosphate serves as cofactor.

The enzyme catalyses L-alanine = D-alanine. The protein operates within amino-acid biosynthesis; D-alanine biosynthesis; D-alanine from L-alanine: step 1/1. In terms of biological role, catalyzes the interconversion of L-alanine and D-alanine. May also act on other amino acids. The chain is Alanine racemase (alr) from Cupriavidus necator (strain ATCC 17699 / DSM 428 / KCTC 22496 / NCIMB 10442 / H16 / Stanier 337) (Ralstonia eutropha).